The primary structure comprises 4730 residues: Dynein heavy chain, cytoplasmic (4730 aa).

2 disordered regions span residues 1 to 23 (MEDQQINVDSPTSGTNTPPVVTP) and 91 to 120 (TINSSNQTSTTTSSSSSSDDNTLTSSQQQS). The segment at 1-1935 (MEDQQINVDS…VIHMANATFY (1935 aa)) is stem. A compositionally biased stretch (low complexity) spans 10–23 (SPTSGTNTPPVVTP). A coiled-coil region spans residues 867 to 900 (VRKLSTSINNFRDKVDDLIVKYSEIKKQLDGLKS). Positions 964–1016 (EDQKDSQSTSGSSNKGGKLNRMNYSIRNKSDEENSSDLTQPQQSQQQQQTISI) are disordered. The span at 969–978 (SQSTSGSSNK) shows a compositional bias: polar residues. Positions 1002-1016 (TQPQQSQQQQQTISI) are enriched in low complexity. Coiled-coil stretches lie at residues 1204-1224 (EKMNQFYETISSSRQELEKLS), 1343-1372 (ALETLKIFEGRLIRLREESDRLSKAKQALD), 1425-1441 (RKVRKSLEDTLQKLKNL), and 1661-1689 (AIERIQQTMERLSDLLGKVQKALGEYLER). AAA stretches follow at residues 1936–2158 (YGFE…VLVS), 2238–2531 (KKIQ…FTRL), 2635–2885 (EVET…WDRA), and 2978–3252 (VFYE…QGRQ). 1974-1981 (GPAGTGKT) provides a ligand contact to ATP. Positions 2231–2253 (IQMDQLRKKIQEIAKQRHLVTKQ) form a coiled coil. An ATP-binding site is contributed by 2276 to 2283 (GPSGGGKT). The interval 2437-2486 (EPFDPQEKEQQKRNENAQLQQQQQTTITSPILTSPPTTSSSSRSTTSTTS) is disordered. Basic and acidic residues predominate over residues 2441 to 2451 (PQEKEQQKRNE). Positions 2442–2462 (QEKEQQKRNENAQLQQQQQTT) form a coiled coil. The segment covering 2454–2486 (QLQQQQQTTITSPILTSPPTTSSSSRSTTSTTS) has biased composition (low complexity). Residues 2674–2681 (GPPGSGKT) and 3016–3023 (GVSGGGKS) each bind ATP. Coiled-coil stretches lie at residues 3271-3349 (INEK…VQLD), 3483-3585 (AQTY…NTQM), and 3854-3881 (TLETLKKETTEIALKVEETETVMQEISE). The segment at 3271-3585 (INEKRDQLEE…QQSENFNTQM (315 aa)) is stalk. 2 AAA regions span residues 3638-3867 (LSKP…EIAL) and 4098-4312 (SHSF…SIDY). The segment at 4432–4465 (KMQSSEEDGEDDQVSGSSKKESSSSSSEDKGKAK) is disordered. A compositionally biased stretch (basic and acidic residues) spans 4449-4463 (SKKESSSSSSEDKGK).

It belongs to the dynein heavy chain family. As to quaternary structure, consists of at least two heavy chains and a number of intermediate and light chains.

The protein resides in the cytoplasm. Its subcellular location is the cytoskeleton. In terms of biological role, cytoplasmic dynein acts as a motor for the intracellular retrograde motility of vesicles and organelles along microtubules. Dynein has ATPase activity; the force-producing power stroke is thought to occur on release of ADP. The chain is Dynein heavy chain, cytoplasmic (dhcA) from Dictyostelium discoideum (Social amoeba).